Here is a 141-residue protein sequence, read N- to C-terminus: Nucleoside diphosphate kinase (141 aa).

Residues K11, F59, R87, T93, R104, and N114 each coordinate ATP. H117 acts as the Pros-phosphohistidine intermediate in catalysis.

The protein belongs to the NDK family. As to quaternary structure, homotetramer. It depends on Mg(2+) as a cofactor.

The protein resides in the cytoplasm. It catalyses the reaction a 2'-deoxyribonucleoside 5'-diphosphate + ATP = a 2'-deoxyribonucleoside 5'-triphosphate + ADP. It carries out the reaction a ribonucleoside 5'-diphosphate + ATP = a ribonucleoside 5'-triphosphate + ADP. Major role in the synthesis of nucleoside triphosphates other than ATP. The ATP gamma phosphate is transferred to the NDP beta phosphate via a ping-pong mechanism, using a phosphorylated active-site intermediate. The protein is Nucleoside diphosphate kinase of Albidiferax ferrireducens (strain ATCC BAA-621 / DSM 15236 / T118) (Rhodoferax ferrireducens).